The sequence spans 658 residues: D-ornithine--citrate ligase (658 aa).

Belongs to the IucA/IucC family.

It carries out the reaction D-ornithine + citrate + ATP = N(5)-[(S)-citryl]-D-ornithine + AMP + diphosphate + H(+). Its pathway is siderophore biosynthesis. Involved in the biosynthesis of the siderophore staphyloferrin A. Catalyzes the ATP-dependent condensation of D-ornithine and citrate to form a citryl-D-ornithine intermediate. The chain is D-ornithine--citrate ligase from Staphylococcus aureus (strain NCTC 8325 / PS 47).